The primary structure comprises 414 residues: Serine hydroxymethyltransferase (414 aa).

(6S)-5,6,7,8-tetrahydrofolate is bound by residues Leu121 and 125-127; that span reads GHL. Position 229 is an N6-(pyridoxal phosphate)lysine (Lys229).

The protein belongs to the SHMT family. As to quaternary structure, homodimer. Pyridoxal 5'-phosphate is required as a cofactor.

Its subcellular location is the cytoplasm. It carries out the reaction (6R)-5,10-methylene-5,6,7,8-tetrahydrofolate + glycine + H2O = (6S)-5,6,7,8-tetrahydrofolate + L-serine. The protein operates within one-carbon metabolism; tetrahydrofolate interconversion. It functions in the pathway amino-acid biosynthesis; glycine biosynthesis; glycine from L-serine: step 1/1. Functionally, catalyzes the reversible interconversion of serine and glycine with tetrahydrofolate (THF) serving as the one-carbon carrier. This reaction serves as the major source of one-carbon groups required for the biosynthesis of purines, thymidylate, methionine, and other important biomolecules. Also exhibits THF-independent aldolase activity toward beta-hydroxyamino acids, producing glycine and aldehydes, via a retro-aldol mechanism. In Paracidovorax citrulli (strain AAC00-1) (Acidovorax citrulli), this protein is Serine hydroxymethyltransferase.